The sequence spans 168 residues: uncharacterized protein (168 aa).

3 disordered regions span residues 1 to 35 (MGSSKSSKKDKQIHPFGTDVSTFRKLSSKEKKKLD), 48 to 97 (KVKK…DKGN), and 126 to 168 (ASIT…GLGM). Residues 29–95 (KEKKKLDEKE…KNSLSRSQDK (67 aa)) are a coiled coil. Positions 68 to 85 (LAEDPMVKNVAENDHDQM) are enriched in basic and acidic residues. Polar residues predominate over residues 126–139 (ASITESSPSAQSNK). Residues 140 to 150 (TNDKQREKELE) show a composition bias toward basic and acidic residues. Over residues 157–168 (VLHKGTKKGLGM) the composition is skewed to basic residues.

This is an uncharacterized protein from Schizosaccharomyces pombe (strain 972 / ATCC 24843) (Fission yeast).